The sequence spans 87 residues: U14-lycotoxin-Ls1c (87 aa).

Residues 1–20 form the signal peptide; the sequence is MNSKVFAVLLLLALLTCILS. The region spanning 21 to 66 is the WAP domain; the sequence is EKYCPTPRNTSCKKMNIKNNCCRDSDCTSNAFCCAEPCGNFCHKAS. Intrachain disulfides connect Cys24–Cys54, Cys32–Cys58, Cys41–Cys53, Cys42–Cys80, and Cys47–Cys62.

Belongs to the venom protein 11 family. 01 (wap-1) subfamily. Contains 5 disulfide bonds. As to expression, expressed by the venom gland.

It is found in the secreted. In terms of biological role, has antibacterial activity. This Lycosa singoriensis (Wolf spider) protein is U14-lycotoxin-Ls1c.